Here is a 230-residue protein sequence, read N- to C-terminus: Increased recombination centers protein 19 (230 aa).

This sequence belongs to the IRC19 family.

Its function is as follows. Involved in sporulation and maintenance of the mitochondrial DNA. Is probably involved in a pathway contributing to genomic integrity. This Saccharomyces cerevisiae (strain JAY291) (Baker's yeast) protein is Increased recombination centers protein 19 (IRC19).